The primary structure comprises 234 residues: Ribonuclease 3 (234 aa).

One can recognise an RNase III domain in the interval 13 to 136 (YITLEKALGY…LMAGVYLEAG (124 aa)). Residue glutamate 49 coordinates Mg(2+). Aspartate 53 is an active-site residue. Mg(2+)-binding residues include serine 122 and glutamate 125. Glutamate 125 is a catalytic residue. Positions 163-232 (DYKTALQELT…AYQALQKLKG (70 aa)) constitute a DRBM domain.

It belongs to the ribonuclease III family. Homodimer. The cofactor is Mg(2+).

Its subcellular location is the cytoplasm. It catalyses the reaction Endonucleolytic cleavage to 5'-phosphomonoester.. Digests double-stranded RNA. Involved in the processing of primary rRNA transcript to yield the immediate precursors to the large and small rRNAs (23S and 16S). Processes some mRNAs, and tRNAs when they are encoded in the rRNA operon. Processes pre-crRNA and tracrRNA of type II CRISPR loci if present in the organism. The protein is Ribonuclease 3 of Helicobacter acinonychis (strain Sheeba).